The following is a 381-amino-acid chain: tRNA pseudouridine synthase D (381 aa).

Catalysis depends on Asp-81, which acts as the Nucleophile. Positions 160-335 (GMPNYFGSQR…TLGSRRFFWV (176 aa)) constitute a TRUD domain.

The protein belongs to the pseudouridine synthase TruD family.

The catalysed reaction is uridine(13) in tRNA = pseudouridine(13) in tRNA. Functionally, responsible for synthesis of pseudouridine from uracil-13 in transfer RNAs. This chain is tRNA pseudouridine synthase D, found in Helicobacter pylori (strain J99 / ATCC 700824) (Campylobacter pylori J99).